The chain runs to 326 residues: Zinc transporter 11 (326 aa).

The first 20 residues, 1–20, serve as a signal peptide directing secretion; sequence MSRSLVFFFLFLVLVVPCLS. Residues 21-49 are Extracellular-facing; it reads HGTGGDHDDDEASHVKSSDLKSKSLISVK. Residues 50-70 form a helical membrane-spanning segment; sequence IACLVIIFVLTFISGVSPYFL. The Cytoplasmic segment spans residues 71 to 75; that stretch reads KWSQG. The helical transmembrane segment at 76 to 96 threads the bilayer; the sequence is FLVLGTQFAGGVFLATALMHF. Residues 97 to 121 are Extracellular-facing; the sequence is LSDADETFRGLLTAEGESEPSPAYP. The chain crosses the membrane as a helical span at residues 122 to 142; that stretch reads FAYMLACAGFMLTMLADSVIA. The Cytoplasmic portion of the chain corresponds to 143-174; the sequence is HIYSKTQNDLELQGEDKSNQRSATTETSIGDS. A helical transmembrane segment spans residues 175 to 195; it reads ILLIVALCFHSVFEGIAIGIS. At 196 to 203 the chain is on the extracellular side; it reads ETKSDAWR. The chain crosses the membrane as a helical span at residues 204-224; that stretch reads ALWTITLHKIFAAIAMGIALL. At 225-235 the chain is on the cytoplasmic side; it reads RMIPDRPLFSS. A helical membrane pass occupies residues 236–256; sequence ITYSFAFAISSPIGVAIGIVI. The Extracellular segment spans residues 257 to 262; the sequence is DATTQG. A helical transmembrane segment spans residues 263–283; that stretch reads SIADWIFALSMSLACGVFVYV. Topologically, residues 284-305 are cytoplasmic; it reads SVNHLLAKGYRPNKKVHVDEPR. A helical membrane pass occupies residues 306–326; that stretch reads YKFLAVLFGVVVIAIVMIWDT.

This sequence belongs to the ZIP transporter (TC 2.A.5) family.

It is found in the cell membrane. Probably mediates zinc uptake from the rhizosphere. This chain is Zinc transporter 11 (ZIP11), found in Arabidopsis thaliana (Mouse-ear cress).